A 513-amino-acid polypeptide reads, in one-letter code: MAELQMLLEEEIPGGRRALFDSYTNLERVADYCENNYIQSADKQRALEETKAYTTQSLASVAYLINTLANNVLQMLDIQASQLRRMESSINHISQTVDIHKEKVARREIGILTTNKNTSRTHKIIAPANLERPVRYIRKPIDYTILDDIGHGVKWLLRFKVSTQNMKMGGLPRTTPPTQKPPSPPMSGKGTLGRHSPYRTLEPVRPPVVPNDYVPSPTRNMAPSQQSPVRTASVNQRNRTYSSSGSSGGSHPSSRSSSRENSGSGSVGVPIAVPTPSPPSVFPAPAGSAGTPPLPATSASAPAPLVPATVPSSTAPNAAAGGAPNLADGFTSPTPPVVSSTPPTGHPVQFYSMNRPASRHTPPTIGGSLPYRRPPSITSQTSLQNQMNGGPFYSQNPVSDTPPPPPPVEEPVFDESPPPPPPPEDYEEEEAAVVEYSDPYAEEDPPWAPRSYLEKVVAIYDYTKDKEDELSFQEGAIIYVIKKNDDGWYEGVMNGVTGLFPGNYVESIMHYSE.

Serine 40 carries the post-translational modification Phosphoserine. The 63-residue stretch at 45–107 (RALEETKAYT…DIHKEKVARR (63 aa)) folds into the t-SNARE coiled-coil homology domain. Positions 167–431 (KMGGLPRTTP…PPEDYEEEEA (265 aa)) are disordered. Residues 174–185 (TTPPTQKPPSPP) are compositionally biased toward pro residues. Phosphoserine occurs at positions 183 and 227. The span at 217 to 241 (PTRNMAPSQQSPVRTASVNQRNRTY) shows a compositional bias: polar residues. Residues 242 to 272 (SSSGSSGGSHPSSRSSSRENSGSGSVGVPIA) show a composition bias toward low complexity. The segment covering 273-282 (VPTPSPPSVF) has biased composition (pro residues). Over residues 283–325 (PAPAGSAGTPPLPATSASAPAPLVPATVPSSTAPNAAAGGAPN) the composition is skewed to low complexity. Threonine 361 bears the Phosphothreonine mark. A Phosphoserine modification is found at serine 368. Residues 376 to 399 (SITSQTSLQNQMNGGPFYSQNPVS) show a composition bias toward polar residues. Over residues 400–409 (DTPPPPPPVE) the composition is skewed to pro residues. The SH3 domain occupies 451-510 (SYLEKVVAIYDYTKDKEDELSFQEGAIIYVIKKNDDGWYEGVMNGVTGLFPGNYVESIMH).

It belongs to the ABI family. Component of the WAVE complex composed of ABI2, CYFIP1 or CYFIP2, BRK1, NCKAP1 and WASF1/WAVE1. Within the complex, a heterodimer containing NCKAP1 and CYFIP1 interacts with a heterotrimer formed by WAVE1, ABI2 and BRK1. CYFIP2 binds to activated RAC1 which causes the complex to dissociate, releasing activated WASF1. Interacts (via SH3 domain) with ABL1 and ABL2. In terms of assembly, (Microbial infection) Interacts with human cytomegalovirus UL135. In terms of processing, phosphorylated by ABL1. In terms of tissue distribution, widely expressed. Abundant in testes, ovary, thymus, and colon, with lower but detectable levels in prostate, peripheral blood leukocytes, and spleen.

Its subcellular location is the cytoplasm. It localises to the nucleus. It is found in the cell projection. The protein resides in the lamellipodium. The protein localises to the filopodium. Its subcellular location is the cytoskeleton. It localises to the cell junction. It is found in the adherens junction. Regulator of actin cytoskeleton dynamics underlying cell motility and adhesion. Functions as a component of the WAVE complex, which activates actin nucleating machinery Arp2/3 to drive lamellipodia formation. Acts as a regulator and substrate of nonreceptor tyrosine kinases ABL1 and ABL2 involved in processes linked to cell growth and differentiation. Positively regulates ABL1-mediated phosphorylation of ENAH, which is required for proper polymerization of nucleated actin filaments at the leading edge. Contributes to the regulation of actin assembly at the tips of neuron projections. In particular, controls dendritic spine morphogenesis and may promote dendritic spine specification toward large mushroom-type spines known as repositories of memory in the brain. In hippocampal neurons, may mediate actin-dependent BDNF-NTRK2 early endocytic trafficking that triggers dendrite outgrowth. Participates in ocular lens morphogenesis, likely by regulating lamellipodia-driven adherens junction formation at the epithelial cell-secondary lens fiber interface. Also required for nascent adherens junction assembly in epithelial cells. The chain is Abl interactor 2 from Homo sapiens (Human).